Here is an 86-residue protein sequence, read N- to C-terminus: uncharacterized protein (86 aa).

4Fe-4S ferredoxin-type domains follow at residues 1–29 (MALL…IGDE) and 31–65 (YVID…PDPE). The [4Fe-4S] cluster site is built by Cys-9, Cys-12, Cys-15, Cys-19, Cys-38, Cys-41, Cys-50, and Cys-54.

[4Fe-4S] cluster is required as a cofactor.

This is an uncharacterized protein from Haemophilus influenzae (strain ATCC 51907 / DSM 11121 / KW20 / Rd).